A 193-amino-acid polypeptide reads, in one-letter code: Segregation and condensation protein B (193 aa).

The protein belongs to the ScpB family. As to quaternary structure, homodimer. Homodimerization may be required to stabilize the binding of ScpA to the Smc head domains. Component of a cohesin-like complex composed of ScpA, ScpB and the Smc homodimer, in which ScpA and ScpB bind to the head domain of Smc. The presence of the three proteins is required for the association of the complex with DNA.

The protein localises to the cytoplasm. Functionally, participates in chromosomal partition during cell division. May act via the formation of a condensin-like complex containing Smc and ScpA that pull DNA away from mid-cell into both cell halves. The protein is Segregation and condensation protein B of Clostridium botulinum (strain Kyoto / Type A2).